Consider the following 899-residue polypeptide: Ewing's tumor-associated antigen 1 homolog (899 aa).

Residues 1–82 (MSRRRKHGDS…TEERYETPKR (82 aa)) form a disordered region. Residues 71–81 (SNTEERYETPK) are compositionally biased toward basic and acidic residues. Positions 105 to 111 (IFWDQNS) match the ATR-activation domain (AAD) motif. A coiled-coil region spans residues 180-210 (TKLKSQNQEEELMKLAKQFDKNMEELDVIQE). Residues Lys-416 and Lys-444 each participate in a glycyl lysine isopeptide (Lys-Gly) (interchain with G-Cter in SUMO2) cross-link. Ser-467 is subject to Phosphoserine. Residues Lys-485 and Lys-539 each participate in a glycyl lysine isopeptide (Lys-Gly) (interchain with G-Cter in SUMO2) cross-link. Residues 607–622 (DDVDDDILYQACDDIE) carry the RBM1 motif motif. At Ser-810 the chain carries Phosphoserine. A disordered region spans residues 833 to 899 (NKTVNPLPGK…AQASSVKKGR (67 aa)). Basic and acidic residues predominate over residues 859–877 (PSKEEEEKNRKCSPEEIQR). The short motif at 868–890 (RKCSPEEIQRKRQAALIRRMAKA) is the RBM2 motif element.

Interacts (via RBM1 motif) with RPA1. Interacts (via RBM2 motif) with RPA2. Interacts (via the ATR-activation domain motif) with ATR. Phosphorylated by ATR.

It is found in the nucleus. Functionally, replication stress response protein that accumulates at DNA damage sites and promotes replication fork progression and integrity. Recruited to stalled replication forks via interaction with the RPA complex and directly stimulates ATR kinase activity independently of TOPBP1. Probably only regulates a subset of ATR targets. The polypeptide is Ewing's tumor-associated antigen 1 homolog (Bos taurus (Bovine)).